A 201-amino-acid chain; its full sequence is CASP-like protein 2D1 (201 aa).

Over 1 to 26 (MRSGEGSTAAAAAAEEEKVKVAAPFR) the chain is Cytoplasmic. The chain crosses the membrane as a helical span at residues 27 to 47 (LAELGLRVCAVPLAVASVWEM). Residues 48-70 (ATNKQVDETYGEVRFSDLSGFRY) are Extracellular-facing. The helical transmembrane segment at 71 to 91 (LVWINAITAAYSVASILLSSC) threads the bilayer. The Cytoplasmic segment spans residues 92 to 98 (RFITRFD). The helical transmembrane segment at 99–119 (WLIFILDQASAYLLLTSASAA) threads the bilayer. At 120-148 (AEVVYLAREGDREVSWGEVCSYFGRFCGA) the chain is on the extracellular side. Residues 149–169 (ATVSVALNAAALLCFMALSLI) traverse the membrane as a helical segment. The Cytoplasmic segment spans residues 170-201 (SAFRVFTKFNPPSQSNSKQQLSQEQGKPVVSG). A compositionally biased stretch (polar residues) spans 180 to 194 (PPSQSNSKQQLSQEQ). Positions 180-201 (PPSQSNSKQQLSQEQGKPVVSG) are disordered.

This sequence belongs to the Casparian strip membrane proteins (CASP) family. Homodimer and heterodimers.

The protein localises to the cell membrane. The sequence is that of CASP-like protein 2D1 from Oryza sativa subsp. indica (Rice).